The chain runs to 210 residues: Putative O-methyltransferase MSMEG_5073/MSMEI_4947 (210 aa).

S-adenosyl-L-methionine is bound by residues Val-37, Glu-59, 61 to 62, Ser-67, Asp-85, and Val-86; that span reads GT. Substrate is bound at residue Asp-133. An S-adenosyl-L-methionine-binding site is contributed by Asp-135.

It belongs to the class I-like SAM-binding methyltransferase superfamily. Cation-dependent O-methyltransferase family.

The polypeptide is Putative O-methyltransferase MSMEG_5073/MSMEI_4947 (Mycolicibacterium smegmatis (strain ATCC 700084 / mc(2)155) (Mycobacterium smegmatis)).